The chain runs to 985 residues: Cation channel sperm-associated auxiliary subunit epsilon (985 aa).

The first 35 residues, 1–35 (MPSAGQRKPGSLLALQALQKWLLRGGVGAMLARQV), serve as a signal peptide directing secretion. Over 36-937 (VAALLLWLSC…ESLGMIPRSS (902 aa)) the chain is Extracellular. Intrachain disulfides connect C87-C101, C130-C235, C275-C365, and C439-C442. 3 N-linked (GlcNAc...) asparagine glycosylation sites follow: N91, N143, and N292. 3 N-linked (GlcNAc...) asparagine glycosylation sites follow: N502, N517, and N565. Intrachain disulfides connect C617–C724, C737–C919, C753–C786, and C838–C869. N-linked (GlcNAc...) asparagine glycosylation is present at N749. N-linked (GlcNAc...) asparagine glycosylation is present at N830. Residues N888, N915, and N920 are each glycosylated (N-linked (GlcNAc...) asparagine). The helical transmembrane segment at 938-958 (VYLVAALIFVLMLTFISILVL) threads the bilayer. Topologically, residues 959-985 (SYFWYLKIYRQFIIEPLHKRPAKQKKN) are cytoplasmic.

The protein belongs to the CATSPERD family. In terms of assembly, component of the CatSper complex or CatSpermasome composed of the core pore-forming members CATSPER1, CATSPER2, CATSPER3 and CATSPER4 as well as auxiliary members CATSPERB, CATSPERG2, CATSPERD, CATSPERE, CATSPERZ, C2CD6/CATSPERT, SLCO6C1, TMEM249, TMEM262 and EFCAB9. HSPA1 may be an additional auxiliary complex member. The core complex members CATSPER1, CATSPER2, CATSPER3 and CATSPER4 form a heterotetrameric channel. The auxiliary CATSPERB, CATSPERG2, CATSPERD and CATSPERE subunits form a pavilion-like structure over the pore which stabilizes the complex through interactions with CATSPER4, CATSPER3, CATSPER1 and CATSPER2 respectively. SLCO6C1 interacts with CATSPERE and TMEM262/CATSPERH interacts with CATSPERB, further stabilizing the complex. C2CD6/CATSPERT interacts at least with CATSPERD and is required for targeting the CatSper complex in the flagellar membrane. In terms of tissue distribution, testis-specific.

It is found in the cell projection. It localises to the cilium. The protein localises to the flagellum membrane. Its function is as follows. Auxiliary component of the CatSper complex, a complex involved in sperm cell hyperactivation. Sperm cell hyperactivation is needed for sperm motility which is essential late in the preparation of sperm for fertilization. The chain is Cation channel sperm-associated auxiliary subunit epsilon from Mus musculus (Mouse).